Here is a 110-residue protein sequence, read N- to C-terminus: uncharacterized protein (110 aa).

The protein localises to the plastid. The protein resides in the chloroplast. This is an uncharacterized protein from Auxenochlorella pyrenoidosa (Freshwater green alga).